The chain runs to 596 residues: mRNA export factor mex67 (596 aa).

Residues serine 128, serine 130, and serine 133 each carry the phosphoserine modification. 3 LRR repeats span residues 215-236, 241-262, and 263-282; these read DVIS…TTLA, KLLN…DPWS, and PKTK…PIVT. An LRRCT domain is found at 283–338; it reads TFANRAMDYQREMVSRFPKLRLLDGNSINSEIIASQSTVPFPVYQSFFDKVETEQI. One can recognise an NTF2 domain in the interval 338-499; it reads IVNSFLAAFF…ILIINDLLVI (162 aa). The 54-residue stretch at 543-596 folds into the TAP-C domain; it reads DTRQQIVLKIKAETGLNDYYAHMCCEQNNWDYNSALASFLELKSRNVIPAEAFS.

This sequence belongs to the NXF family. As to quaternary structure, interacts with mlo3 and rae1.

Its subcellular location is the nucleus. It localises to the cytoplasm. Its function is as follows. Involved in the export of mRNA from the nucleus to the cytoplasm. This chain is mRNA export factor mex67 (mex67), found in Schizosaccharomyces pombe (strain 972 / ATCC 24843) (Fission yeast).